The chain runs to 295 residues: Bifunctional protein FolD (295 aa).

NADP(+) is bound by residues 166 to 168 (GRS), Ser191, and Ile232.

This sequence belongs to the tetrahydrofolate dehydrogenase/cyclohydrolase family. Homodimer.

It catalyses the reaction (6R)-5,10-methylene-5,6,7,8-tetrahydrofolate + NADP(+) = (6R)-5,10-methenyltetrahydrofolate + NADPH. The enzyme catalyses (6R)-5,10-methenyltetrahydrofolate + H2O = (6R)-10-formyltetrahydrofolate + H(+). The protein operates within one-carbon metabolism; tetrahydrofolate interconversion. Functionally, catalyzes the oxidation of 5,10-methylenetetrahydrofolate to 5,10-methenyltetrahydrofolate and then the hydrolysis of 5,10-methenyltetrahydrofolate to 10-formyltetrahydrofolate. This chain is Bifunctional protein FolD, found in Rhodopseudomonas palustris (strain BisA53).